The following is a 426-amino-acid chain: UDP-N-acetylmuramoylalanine--D-glutamate ligase (426 aa).

112–118 serves as a coordination point for ATP; the sequence is GSVGKST.

The protein belongs to the MurCDEF family.

The protein localises to the cytoplasm. It catalyses the reaction UDP-N-acetyl-alpha-D-muramoyl-L-alanine + D-glutamate + ATP = UDP-N-acetyl-alpha-D-muramoyl-L-alanyl-D-glutamate + ADP + phosphate + H(+). It functions in the pathway cell wall biogenesis; peptidoglycan biosynthesis. Cell wall formation. Catalyzes the addition of glutamate to the nucleotide precursor UDP-N-acetylmuramoyl-L-alanine (UMA). In Thermosipho melanesiensis (strain DSM 12029 / CIP 104789 / BI429), this protein is UDP-N-acetylmuramoylalanine--D-glutamate ligase.